The primary structure comprises 150 residues: 3-dehydroquinate dehydratase (150 aa).

Y26 functions as the Proton acceptor in the catalytic mechanism. Residues N77, H83, and D90 each coordinate substrate. Catalysis depends on H103, which acts as the Proton donor. Residues 104-105 (LS) and R114 each bind substrate.

It belongs to the type-II 3-dehydroquinase family. Homododecamer.

The catalysed reaction is 3-dehydroquinate = 3-dehydroshikimate + H2O. The protein operates within metabolic intermediate biosynthesis; chorismate biosynthesis; chorismate from D-erythrose 4-phosphate and phosphoenolpyruvate: step 3/7. In terms of biological role, catalyzes a trans-dehydration via an enolate intermediate. The sequence is that of 3-dehydroquinate dehydratase from Yersinia pseudotuberculosis serotype O:1b (strain IP 31758).